A 149-amino-acid polypeptide reads, in one-letter code: Transcriptional regulator MraZ (149 aa).

SpoVT-AbrB domains are found at residues 6 to 52 (RSYR…TPED) and 81 to 124 (VEEL…SEEE).

It belongs to the MraZ family. As to quaternary structure, forms oligomers.

It is found in the cytoplasm. The protein resides in the nucleoid. The protein is Transcriptional regulator MraZ of Oleidesulfovibrio alaskensis (strain ATCC BAA-1058 / DSM 17464 / G20) (Desulfovibrio alaskensis).